The primary structure comprises 317 residues: 2,3-dihydroxyphenylpropionate/2,3-dihydroxicinnamic acid 1,2-dioxygenase (317 aa).

Catalysis depends on His115, which acts as the Proton donor. His179 functions as the Proton acceptor in the catalytic mechanism.

This sequence belongs to the LigB/MhpB extradiol dioxygenase family. As to quaternary structure, homotetramer. Fe(2+) serves as cofactor.

It carries out the reaction 3-(2,3-dihydroxyphenyl)propanoate + O2 = (2Z,4E)-2-hydroxy-6-oxonona-2,4-dienedioate + H(+). It catalyses the reaction (2E)-3-(2,3-dihydroxyphenyl)prop-2-enoate + O2 = (2Z,4E,7E)-2-hydroxy-6-oxonona-2,4,7-trienedioate + H(+). It functions in the pathway aromatic compound metabolism; 3-phenylpropanoate degradation. In terms of biological role, catalyzes the non-heme iron(II)-dependent oxidative cleavage of 2,3-dihydroxyphenylpropionic acid and 2,3-dihydroxicinnamic acid into 2-hydroxy-6-ketononadienedioate and 2-hydroxy-6-ketononatrienedioate, respectively. This chain is 2,3-dihydroxyphenylpropionate/2,3-dihydroxicinnamic acid 1,2-dioxygenase, found in Photorhabdus laumondii subsp. laumondii (strain DSM 15139 / CIP 105565 / TT01) (Photorhabdus luminescens subsp. laumondii).